The primary structure comprises 524 residues: Bifunctional purine biosynthesis protein PurH (524 aa).

In terms of domain architecture, MGS-like spans M1–V145.

Belongs to the PurH family.

The catalysed reaction is (6R)-10-formyltetrahydrofolate + 5-amino-1-(5-phospho-beta-D-ribosyl)imidazole-4-carboxamide = 5-formamido-1-(5-phospho-D-ribosyl)imidazole-4-carboxamide + (6S)-5,6,7,8-tetrahydrofolate. It carries out the reaction IMP + H2O = 5-formamido-1-(5-phospho-D-ribosyl)imidazole-4-carboxamide. Its pathway is purine metabolism; IMP biosynthesis via de novo pathway; 5-formamido-1-(5-phospho-D-ribosyl)imidazole-4-carboxamide from 5-amino-1-(5-phospho-D-ribosyl)imidazole-4-carboxamide (10-formyl THF route): step 1/1. The protein operates within purine metabolism; IMP biosynthesis via de novo pathway; IMP from 5-formamido-1-(5-phospho-D-ribosyl)imidazole-4-carboxamide: step 1/1. The polypeptide is Bifunctional purine biosynthesis protein PurH (Cupriavidus taiwanensis (strain DSM 17343 / BCRC 17206 / CCUG 44338 / CIP 107171 / LMG 19424 / R1) (Ralstonia taiwanensis (strain LMG 19424))).